Reading from the N-terminus, the 359-residue chain is GDSL esterase/lipase At2g30310 (359 aa).

The first 28 residues, 1 to 28 (MSTSKTIVFGLFVATLLVSCNVAANATT), serve as a signal peptide directing secretion. Residue Ser41 is the Nucleophile of the active site. N-linked (GlcNAc...) asparagine glycans are attached at residues Asn103 and Asn325. Catalysis depends on residues Asp333 and His336.

Belongs to the 'GDSL' lipolytic enzyme family.

The protein resides in the secreted. The protein is GDSL esterase/lipase At2g30310 of Arabidopsis thaliana (Mouse-ear cress).